The following is a 451-amino-acid chain: Probable glycine dehydrogenase (decarboxylating) subunit 1 (451 aa).

The protein belongs to the GcvP family. N-terminal subunit subfamily. The glycine cleavage system is composed of four proteins: P, T, L and H. In this organism, the P 'protein' is a heterodimer of two subunits.

The catalysed reaction is N(6)-[(R)-lipoyl]-L-lysyl-[glycine-cleavage complex H protein] + glycine + H(+) = N(6)-[(R)-S(8)-aminomethyldihydrolipoyl]-L-lysyl-[glycine-cleavage complex H protein] + CO2. Functionally, the glycine cleavage system catalyzes the degradation of glycine. The P protein binds the alpha-amino group of glycine through its pyridoxal phosphate cofactor; CO(2) is released and the remaining methylamine moiety is then transferred to the lipoamide cofactor of the H protein. This is Probable glycine dehydrogenase (decarboxylating) subunit 1 from Thermococcus kodakarensis (strain ATCC BAA-918 / JCM 12380 / KOD1) (Pyrococcus kodakaraensis (strain KOD1)).